The primary structure comprises 378 residues: Histidine decarboxylase (378 aa).

Histidine 120 serves as a coordination point for substrate. An N6-(pyridoxal phosphate)lysine modification is found at lysine 233. Serine 323 is a catalytic residue.

It belongs to the group II decarboxylase family. As to quaternary structure, homotetramer. Pyridoxal 5'-phosphate serves as cofactor.

It carries out the reaction L-histidine + H(+) = histamine + CO2. This Morganella morganii (Proteus morganii) protein is Histidine decarboxylase (hdc).